We begin with the raw amino-acid sequence, 142 residues long: Transcriptional regulator MraZ (142 aa).

2 SpoVT-AbrB domains span residues 5–47 (EFTH…PLNE) and 76–119 (ATDC…SAER).

It belongs to the MraZ family. As to quaternary structure, forms oligomers.

It is found in the cytoplasm. The protein resides in the nucleoid. The protein is Transcriptional regulator MraZ of Limosilactobacillus reuteri (strain DSM 20016) (Lactobacillus reuteri).